A 352-amino-acid polypeptide reads, in one-letter code: Protein RecA (352 aa).

Residue 67 to 74 (GPESSGKT) coordinates ATP. Residues 332-352 (VKPADAESKEDSPKLKAVDGF) form a disordered region. Positions 335–352 (ADAESKEDSPKLKAVDGF) are enriched in basic and acidic residues.

It belongs to the RecA family.

It localises to the cytoplasm. In terms of biological role, can catalyze the hydrolysis of ATP in the presence of single-stranded DNA, the ATP-dependent uptake of single-stranded DNA by duplex DNA, and the ATP-dependent hybridization of homologous single-stranded DNAs. It interacts with LexA causing its activation and leading to its autocatalytic cleavage. This chain is Protein RecA, found in Pseudarthrobacter chlorophenolicus (strain ATCC 700700 / DSM 12829 / CIP 107037 / JCM 12360 / KCTC 9906 / NCIMB 13794 / A6) (Arthrobacter chlorophenolicus).